We begin with the raw amino-acid sequence, 174 residues long: Large ribosomal subunit protein uL18 (174 aa).

The protein belongs to the universal ribosomal protein uL18 family. Part of the 50S ribosomal subunit. Contacts the 5S and 23S rRNAs.

In terms of biological role, this is one of the proteins that bind and probably mediate the attachment of the 5S RNA into the large ribosomal subunit, where it forms part of the central protuberance. The chain is Large ribosomal subunit protein uL18 from Methanoregula boonei (strain DSM 21154 / JCM 14090 / 6A8).